A 525-amino-acid polypeptide reads, in one-letter code: GMP synthase [glutamine-hydrolyzing] (525 aa).

In terms of domain architecture, Glutamine amidotransferase type-1 spans Arg9–Leu207. Cys86 serves as the catalytic Nucleophile. Residues His181 and Glu183 contribute to the active site. In terms of domain architecture, GMPS ATP-PPase spans Trp208–Arg400. Ser235–Ser241 contributes to the ATP binding site.

Homodimer.

It carries out the reaction XMP + L-glutamine + ATP + H2O = GMP + L-glutamate + AMP + diphosphate + 2 H(+). Its pathway is purine metabolism; GMP biosynthesis; GMP from XMP (L-Gln route): step 1/1. In terms of biological role, catalyzes the synthesis of GMP from XMP. This Pseudomonas savastanoi pv. phaseolicola (strain 1448A / Race 6) (Pseudomonas syringae pv. phaseolicola (strain 1448A / Race 6)) protein is GMP synthase [glutamine-hydrolyzing].